Here is a 336-residue protein sequence, read N- to C-terminus: MQEYIERVAAGEDLSLDAARDAVTTLFEDATDAEIGALLGALRAKGETEAEIAGFAQGMRDAAITVAPDCTPLVDTCGTGGDDYDTINVSTTAALVAAGAGIPTAKHGNYSVSSASGSSDVLDALGVELATDPAAVEARIETDGIGYMHAPAFHPGMEAVIGPRRDLGVRTIFNLLGPLTNPARADAQVVGVYDPALVPVLARALSRMAVDRALVVHGAGLDEFALHGDSTVAEVDGDTVTTTTVSPSTFGLAEAPIDAVAGGGPEANAADLRGIVTGELTGPKRDIVVANAGAAIYVGGGADSLAAGADRAAAAIDSGAAADTLAALTDAHAVQQ.

5-phospho-alpha-D-ribose 1-diphosphate is bound by residues Gly-78, 81–82 (GD), Thr-86, 88–91 (NVST), 106–114 (KHGNYSVSS), and Ser-118. Gly-78 provides a ligand contact to anthranilate. Ser-90 contributes to the Mg(2+) binding site. Asn-109 contributes to the anthranilate binding site. Arg-164 is a binding site for anthranilate. Mg(2+)-binding residues include Asp-222 and Glu-223.

Belongs to the anthranilate phosphoribosyltransferase family. As to quaternary structure, homodimer. Mg(2+) serves as cofactor.

The catalysed reaction is N-(5-phospho-beta-D-ribosyl)anthranilate + diphosphate = 5-phospho-alpha-D-ribose 1-diphosphate + anthranilate. Its pathway is amino-acid biosynthesis; L-tryptophan biosynthesis; L-tryptophan from chorismate: step 2/5. Functionally, catalyzes the transfer of the phosphoribosyl group of 5-phosphorylribose-1-pyrophosphate (PRPP) to anthranilate to yield N-(5'-phosphoribosyl)-anthranilate (PRA). This Halobacterium salinarum (strain ATCC 29341 / DSM 671 / R1) protein is Anthranilate phosphoribosyltransferase.